Consider the following 145-residue polypeptide: Protoporphyrinogen IX oxidase (145 aa).

Helical transmembrane passes span 6–26 (LWFKSAHLISAICWMAGLLYL), 61–81 (AMISTFIFGLINAHIYGFVAL), 83–103 (TWFQFKMFAVLILVIFHGLLA), and 123–143 (IVNEIPAICMVIAVIMVIVKP). His-12 lines the heme pocket. Lys-88 provides a ligand contact to heme.

This sequence belongs to the HemJ family. Homodimer. Heme b is required as a cofactor.

It is found in the cell membrane. It catalyses the reaction protoporphyrinogen IX + 3 A = protoporphyrin IX + 3 AH2. It participates in porphyrin-containing compound metabolism; protoporphyrin-IX biosynthesis; protoporphyrin-IX from protoporphyrinogen-IX: step 1/1. In terms of biological role, catalyzes the oxidation of protoporphyrinogen IX to protoporphyrin IX. Is involved in the biosynthesis of tetrapyrrole molecules like heme. Does not use oxygen or artificial electron acceptors such as menadione or benzoquinone. The polypeptide is Protoporphyrinogen IX oxidase (Rickettsia prowazekii (strain Madrid E)).